A 516-amino-acid chain; its full sequence is DNA-(apurinic or apyrimidinic site) endonuclease 2 (516 aa).

Mg(2+) contacts are provided by Asn8 and Glu47. Tyr155 is a catalytic residue. Asp196, Asn198, Asp302, and His303 together coordinate Mg(2+). Asp196 (proton donor/acceptor) is an active-site residue. His303 serves as the catalytic Proton acceptor. Residues 357-366 (QPSHQIQAQR) show a composition bias toward polar residues. The tract at residues 357–389 (QPSHQIQAQRQPRKACMHSTRLRKSQGGPKRKQ) is disordered. Over residues 367–389 (QPRKACMHSTRLRKSQGGPKRKQ) the composition is skewed to basic residues. Lys370 is covalently cross-linked (Glycyl lysine isopeptide (Lys-Gly) (interchain with G-Cter in ubiquitin)). Residues 389–396 (QKNLMSYF) are required for the interaction and colocalization with PCNA in nuclear foci in presence of oxidative-induced DNA damaging agents. 4 residues coordinate Zn(2+): Cys467, His470, Cys493, and Cys507. The GRF-type zinc finger occupies 467 to 516 (CGGHREPCVMRTVKKTGPNFGRQFYMCARPRGPPSDPSSRCNFFLWSRPS).

Belongs to the DNA repair enzymes AP/ExoA family. In terms of assembly, interacts with PCNA. This interaction is increased by misincorporation of uracil in nuclear DNA. It depends on Mg(2+) as a cofactor. Mn(2+) is required as a cofactor. In terms of processing, ubiquitinated by the CUL9-RBX1 complex. Ubiquitinated by MKRN3 at Lys-370 leading to proteasomal degradation. Expressed in lymphocytes, thymocytes and splenocytes (at protein level). Highly expressed in the thymus and weakly expressed in the bone marrow, spleen, eye, kidney, lung, brain and uterus.

It is found in the nucleus. It localises to the cytoplasm. The protein localises to the mitochondrion. The catalysed reaction is Exonucleolytic cleavage in the 3'- to 5'-direction to yield nucleoside 5'-phosphates.. 3'-5' exonuclease activity is activated by sodium and manganese. 3'-5' exonuclease and 3'-phosphodiesterase activities are stimulated in presence of PCNA. In terms of biological role, functions as a weak apurinic/apyrimidinic (AP) endodeoxyribonuclease in the DNA base excision repair (BER) pathway of DNA lesions induced by oxidative and alkylating agents. Initiates repair of AP sites in DNA by catalyzing hydrolytic incision of the phosphodiester backbone immediately adjacent to the damage, generating a single-strand break with 5'-deoxyribose phosphate and 3'-hydroxyl ends. Also displays double-stranded DNA 3'-5' exonuclease, 3'-phosphodiesterase activities. Shows robust 3'-5' exonuclease activity on 3'-recessed heteroduplex DNA and is able to remove mismatched nucleotides preferentially. Shows fairly strong 3'-phosphodiesterase activity involved in the removal of 3'-damaged termini formed in DNA by oxidative agents. In the nucleus functions in the PCNA-dependent BER pathway. Plays a role in reversing blocked 3' DNA ends, problematic lesions that preclude DNA synthesis. Required for somatic hypermutation (SHM) and DNA cleavage step of class switch recombination (CSR) of immunoglobulin genes. Required for proper cell cycle progression during proliferation of peripheral lymphocytes. This Mus musculus (Mouse) protein is DNA-(apurinic or apyrimidinic site) endonuclease 2 (Apex2).